Consider the following 501-residue polypeptide: UPF0288 protein Maeo_0995 (501 aa).

It belongs to the UPF0288 family.

The polypeptide is UPF0288 protein Maeo_0995 (Methanococcus aeolicus (strain ATCC BAA-1280 / DSM 17508 / OCM 812 / Nankai-3)).